The primary structure comprises 505 residues: Pup deamidase/depupylase (505 aa).

6–10 serves as a coordination point for ATP; that stretch reads GTEVE. E8 and Y93 together coordinate Mg(2+). Residue D95 is the Proton acceptor of the active site. E100 is a Mg(2+) binding site. 102–103 is a binding site for ATP; the sequence is SA. H156 lines the Mg(2+) pocket. Residues N158 and R240 each coordinate ATP. Residue H242 participates in Mg(2+) binding.

This sequence belongs to the Pup ligase/Pup deamidase family. Pup deamidase subfamily. In terms of assembly, interacts with the prokaryotic ubiquitin-like protein Pup. Requires ATP as cofactor.

It catalyses the reaction [prokaryotic ubiquitin-like protein]-C-terminal-L-glutamine + H2O = [prokaryotic ubiquitin-like protein]-C-terminal-L-glutamate + NH4(+). It functions in the pathway protein degradation; proteasomal Pup-dependent pathway. In terms of biological role, specifically catalyzes the deamidation of the C-terminal glutamine of the prokaryotic ubiquitin-like protein Pup to glutamate, thereby rendering Pup competent for conjugation. Also displays depupylase (DPUP) activity, removing conjugated Pup from target proteins; is thus involved in the recycling of Pup and may function similarly to deubiquitinases (DUBs) in eukaryotes to prevent or promote proteasomal degradation of certain proteins. The sequence is that of Pup deamidase/depupylase (dop) from Mycobacterium tuberculosis (strain CDC 1551 / Oshkosh).